The following is a 451-amino-acid chain: Phosphoglucosamine mutase (451 aa).

The Phosphoserine intermediate role is filled by Ser102. Ser102, Asp242, Asp244, and Asp246 together coordinate Mg(2+). A Phosphoserine modification is found at Ser102.

The protein belongs to the phosphohexose mutase family. Mg(2+) is required as a cofactor. In terms of processing, activated by phosphorylation.

The enzyme catalyses alpha-D-glucosamine 1-phosphate = D-glucosamine 6-phosphate. Functionally, catalyzes the conversion of glucosamine-6-phosphate to glucosamine-1-phosphate. This is Phosphoglucosamine mutase from Staphylococcus epidermidis (strain ATCC 35984 / DSM 28319 / BCRC 17069 / CCUG 31568 / BM 3577 / RP62A).